Consider the following 159-residue polypeptide: Protein A40 (159 aa).

Over 1-9 the chain is Cytoplasmic; sequence MNKHKTDYA. A helical; Signal-anchor for type II membrane protein membrane pass occupies residues 10–30; the sequence is GYACCVICGLIVGIIFTATLL. Topologically, residues 31 to 159 are extracellular; sequence KVVERKLVHT…TPKLHSCYTI (129 aa). Residues 63 to 159 enclose the C-type lectin domain; the sequence is YNNKCIHLST…TPKLHSCYTI (97 aa).

It belongs to the poxviridae A40 protein family.

It localises to the host membrane. This is Protein A40 from Bos taurus (Bovine).